The sequence spans 370 residues: N-acetyltaurine hydrolase (370 aa).

The a divalent metal cation site is built by His26, His28, Glu189, His221, His250, and Asp318.

This sequence belongs to the metallo-dependent hydrolases superfamily. Phosphotriesterase family. A divalent metal cation is required as a cofactor.

It is found in the cytoplasm. The protein resides in the cytosol. The enzyme catalyses N-acetyltaurine + H2O = taurine + acetate. N-acetyltaurine hydrolase catalyzes the hydrolysis of N-acetyltaurine into taurine and acetate. This chain is N-acetyltaurine hydrolase (pter), found in Dictyostelium discoideum (Social amoeba).